A 1068-amino-acid polypeptide reads, in one-letter code: Phosphatidylinositol 4,5-bisphosphate 3-kinase catalytic subunit alpha isoform (1068 aa).

A PI3K-ABD domain is found at 16–105 (MPPRILVECL…QPFLKVIEPV (90 aa)). The region spanning 187–289 (KGQIIVVIWV…GRMPNLMLMA (103 aa)) is the PI3K-RBD domain. One can recognise a C2 PI3K-type domain in the interval 330–487 (INSALRIKIL…DWFSSVVKFP (158 aa)). The PIK helical domain maps to 517-694 (LARDNELREN…GLLLESYCRA (178 aa)). Residues 765-1051 (RLEECRIMSS…QMNDAHHGGW (287 aa)) form the PI3K/PI4K catalytic domain. A G-loop region spans residues 771–777 (IMSSAKR). The tract at residues 912–920 (GIGDRHNSN) is catalytic loop. The interval 931-957 (HIDFGHFLDHKKKKFGYKRERVPFVLT) is activation loop.

This sequence belongs to the PI3/PI4-kinase family. As to quaternary structure, heterodimer of a catalytic subunit PIK3CA and a p85 regulatory subunit (PIK3R1, PIK3R2 or PIK3R3). Interacts with IRS1 in nuclear extracts. Interacts with RUFY3. Interacts with RASD2. Interacts with APPL1. Interacts with HRAS and KRAS. Interaction with HRAS/KRAS is required for PI3K pathway signaling and cell proliferation stimulated by EGF and FGF2. Interacts with FAM83B; activates the PI3K/AKT signaling cascade.

It carries out the reaction L-seryl-[protein] + ATP = O-phospho-L-seryl-[protein] + ADP + H(+). The enzyme catalyses a 1,2-diacyl-sn-glycero-3-phospho-(1D-myo-inositol) + ATP = a 1,2-diacyl-sn-glycero-3-phospho-(1D-myo-inositol-3-phosphate) + ADP + H(+). It catalyses the reaction a 1,2-diacyl-sn-glycero-3-phospho-(1D-myo-inositol-4,5-bisphosphate) + ATP = a 1,2-diacyl-sn-glycero-3-phospho-(1D-myo-inositol-3,4,5-trisphosphate) + ADP + H(+). The catalysed reaction is 1,2-dioctanoyl-sn-glycero-3-phospho-(1D-myo-inositol-4,5-bisphosphate) + ATP = 1,2-dioctanoyl-sn-glycero-3-phospho-(1D-myo-inositol-3,4,5-trisphosphate) + ADP + H(+). It carries out the reaction 1-octadecanoyl-2-(5Z,8Z,11Z,14Z)-eicosatetraenoyl-sn-glycero-3-phospho-1D-myo-inositol 4,5-bisphosphate + ATP = 1-octadecanoyl-2-(5Z,8Z,11Z,14Z-eicosatetraenoyl)-sn-glycero-3-phospho-(1D-myo-inositol 3,4,5-triphosphate) + ADP + H(+). Its pathway is phospholipid metabolism; phosphatidylinositol phosphate biosynthesis. Phosphoinositide-3-kinase (PI3K) phosphorylates phosphatidylinositol (PI) and its phosphorylated derivatives at position 3 of the inositol ring to produce 3-phosphoinositides. Uses ATP and PtdIns(4,5)P2 (phosphatidylinositol 4,5-bisphosphate) to generate phosphatidylinositol 3,4,5-trisphosphate (PIP3). PIP3 plays a key role by recruiting PH domain-containing proteins to the membrane, including AKT1 and PDPK1, activating signaling cascades involved in cell growth, survival, proliferation, motility and morphology. Participates in cellular signaling in response to various growth factors. Involved in the activation of AKT1 upon stimulation by receptor tyrosine kinases ligands such as EGF, insulin, IGF1, VEGFA and PDGF. Involved in signaling via insulin-receptor substrate (IRS) proteins. Essential in endothelial cell migration during vascular development through VEGFA signaling, possibly by regulating RhoA activity. Required for lymphatic vasculature development, possibly by binding to RAS and by activation by EGF and FGF2, but not by PDGF. Regulates invadopodia formation through the PDPK1-AKT1 pathway. Participates in cardiomyogenesis in embryonic stem cells through a AKT1 pathway. Participates in vasculogenesis in embryonic stem cells through PDK1 and protein kinase C pathway. In addition to its lipid kinase activity, it displays a serine-protein kinase activity that results in the autophosphorylation of the p85alpha regulatory subunit as well as phosphorylation of other proteins such as 4EBP1, H-Ras, the IL-3 beta c receptor and possibly others. Plays a role in the positive regulation of phagocytosis and pinocytosis. The sequence is that of Phosphatidylinositol 4,5-bisphosphate 3-kinase catalytic subunit alpha isoform (PIK3CA) from Bos taurus (Bovine).